The chain runs to 106 residues: UPF0145 protein (106 aa).

It belongs to the UPF0145 family.

The chain is UPF0145 protein from Listeria grayi (Listeria murrayi).